The chain runs to 227 residues: Probable septum site-determining protein MinC (227 aa).

This sequence belongs to the MinC family. As to quaternary structure, interacts with MinD and FtsZ.

Its function is as follows. Cell division inhibitor that blocks the formation of polar Z ring septums. Rapidly oscillates between the poles of the cell to destabilize FtsZ filaments that have formed before they mature into polar Z rings. Prevents FtsZ polymerization. In Geobacillus thermodenitrificans (strain NG80-2), this protein is Probable septum site-determining protein MinC.